The sequence spans 288 residues: Glucose uptake protein GlcU (288 aa).

10 helical membrane passes run 4–26 (LIAL…VGGG), 33–51 (GTTF…TGNA), 56–75 (LTII…GQGY), 82–104 (LIGV…TLFS), 114–136 (GVQV…LTSI), 148–170 (NFGK…VVVA), 180–197 (ALFF…ILSA), 206–225 (TLWN…FMFY), 230–252 (VGVA…GGIF), and 264–283 (IGIW…SEIL).

This sequence belongs to the GRP transporter (TC 2.A.7.5) family.

Its subcellular location is the cell membrane. Its function is as follows. Involved in the uptake of glucose. This Staphylococcus xylosus protein is Glucose uptake protein GlcU (glcU).